The primary structure comprises 435 residues: MSEYRQATDAFASNPVESKQEIRNYTMNFGPQHPAAHGVLRLILEMDGETVVRADPHIGLLHRGTEKLAESKPFNQSVPYMDRLDYVSMMCNEHAYVRAIESLMGIEAPERAQYIRTMFDEITRIKNHLMWVGSNALDLGAMAVMLYAFREREELMDVYEAVSGARMHAAYYRPGGVYRDLPDRMPKYKESRWHKGGALTKLNAAREGSMLDFLENFTDTFPSRVDEYETLLTENRIWKQRTVDVGIISPDLARAWGMTGPMLRGSGIEWDLRKKQPYAKYDAVDFDVPVGTNGDCYDRYLVRVAEMRESNRIIKQCVKWLKANPGPVMVTNFKVAPPSREGMKDDMEALIHHFKLFSEGYCVPAGETYCAVEAPKGEFGCYLMSDGANKPFRVHLRAPGFAHLSSMDAVVRGYLLADVVAMIGTYDLVFGEVDR.

Belongs to the complex I 49 kDa subunit family. As to quaternary structure, NDH-1 is composed of 14 different subunits. Subunits NuoB, C, D, E, F, and G constitute the peripheral sector of the complex.

It localises to the cell inner membrane. The catalysed reaction is a quinone + NADH + 5 H(+)(in) = a quinol + NAD(+) + 4 H(+)(out). Functionally, NDH-1 shuttles electrons from NADH, via FMN and iron-sulfur (Fe-S) centers, to quinones in the respiratory chain. The immediate electron acceptor for the enzyme in this species is believed to be ubiquinone. Couples the redox reaction to proton translocation (for every two electrons transferred, four hydrogen ions are translocated across the cytoplasmic membrane), and thus conserves the redox energy in a proton gradient. The sequence is that of NADH-quinone oxidoreductase subunit D from Xanthomonas campestris pv. campestris (strain 8004).